Consider the following 358-residue polypeptide: WD repeat domain phosphoinositide-interacting protein 4 (358 aa).

WD repeat units lie at residues 2–40 (AQQR…EKGH) and 188–228 (AHQS…KLVE). Positions 229-232 (LRRG) match the L/FRRG motif motif. Residues 233–272 (TDPATLYCINFSHDSSFLCASSDKGTVHIFALKDTKLNRR) form a WD 3 repeat.

This sequence belongs to the WD repeat PROPPIN family.

The protein localises to the preautophagosomal structure. Component of the autophagy machinery that controls the major intracellular degradation process by which cytoplasmic materials are packaged into autophagosomes and delivered to lysosomes for degradation. Binds phosphatidylinositol 3-phosphate (PtdIns3P). This is WD repeat domain phosphoinositide-interacting protein 4 (wdr45) from Danio rerio (Zebrafish).